A 994-amino-acid polypeptide reads, in one-letter code: Leucine-rich repeat receptor-like kinase protein FLORAL ORGAN NUMBER1 (994 aa).

The N-terminal stretch at 1-17 (MPPTLLLLLLLLPPSLA) is a signal peptide. LRR repeat units lie at residues 73 to 93 (AINL…IALL), 94 to 117 (DSLA…LPTL), 118 to 141 (PSLR…DSGG), 147 to 171 (FPSL…SASH), 172 to 194 (ARLR…SYGD), 195 to 219 (LAAL…LSRL), 244 to 268 (LGAL…LGRL), 269 to 292 (QRLD…LGDL), 293 to 316 (SSLA…LANL), 318 to 340 (NLKL…VAGF), 341 to 364 (AQLE…LGKN), 365 to 388 (GRLK…LCAG), 390 to 412 (RLEM…LGDC), 413 to 436 (KTLT…LFNL), 438 to 459 (QANM…VIGG), 460 to 483 (DKIG…IGNL), 484 to 507 (PALQ…IGNL), 509 to 531 (NLSR…LIRC), 533 to 555 (SLAA…ITSL), 556 to 579 (KILC…MSNM), and 581 to 604 (SLTT…QFLV). Residues asparagine 75, asparagine 98, asparagine 124, asparagine 129, and asparagine 159 are each glycosylated (N-linked (GlcNAc...) asparagine). A glycan (N-linked (GlcNAc...) asparagine) is linked at asparagine 256. Residue asparagine 315 is glycosylated (N-linked (GlcNAc...) asparagine). N-linked (GlcNAc...) asparagine glycosylation is present at asparagine 352. N-linked (GlcNAc...) asparagine glycans are attached at residues asparagine 495, asparagine 509, and asparagine 514. 2 N-linked (GlcNAc...) asparagine glycosylation sites follow: asparagine 562 and asparagine 578. A glycan (N-linked (GlcNAc...) asparagine) is linked at asparagine 606. A helical transmembrane segment spans residues 647-667 (KKMLVALVAAFAAVAVAFLGA). Positions 704–978 (VKEDNIIGKG…TMREVVHMLS (275 aa)) constitute a Protein kinase domain. Residues 710–718 (IGKGGAGIV) and lysine 731 contribute to the ATP site. The active-site Proton acceptor is aspartate 828.

It belongs to the protein kinase superfamily. Ser/Thr protein kinase family. As to expression, expressed in shoot apical meristem, and after transition to the reproductive phase, detected in the inflorescence and the floral meristems. Expressed uniformly throughout the meristems. Expressed also in floral organ primordia, such as the palea, lemma, lodicules, stamens, carpels and ovules.

Its subcellular location is the membrane. The catalysed reaction is L-seryl-[protein] + ATP = O-phospho-L-seryl-[protein] + ADP + H(+). It carries out the reaction L-threonyl-[protein] + ATP = O-phospho-L-threonyl-[protein] + ADP + H(+). In terms of biological role, receptor-like kinase protein that regulates the size of the floral meristem. This is Leucine-rich repeat receptor-like kinase protein FLORAL ORGAN NUMBER1 (FON1) from Oryza sativa subsp. japonica (Rice).